We begin with the raw amino-acid sequence, 192 residues long: MRLIFLGPPGAGKGTQAKLLTERYGIPQLSTGDMLRTAVAQATEVGKRAKAVMDAGQLVSDEIVNEIVSDRIDSADCARGFILDGYPRTVPQAVALDRMLEEKGLKLDAVIELKVDEAALVRRMENRVTETVAAGGTVRSDDNPEAFRRRLQEYREKTAPLSEHYARTGRLKTVDGMADVHTVTAEIEKILA.

10–15 lines the ATP pocket; it reads GAGKGT. The interval 30-59 is NMP; it reads STGDMLRTAVAQATEVGKRAKAVMDAGQLV. AMP contacts are provided by residues T31, R36, 57 to 59, 85 to 88, and Q92; these read QLV and GYPR. Residues 126 to 142 form an LID region; the sequence is NRVTETVAAGGTVRSDD. R127 provides a ligand contact to ATP. AMP is bound by residues R139 and R150. Residue A178 coordinates ATP.

This sequence belongs to the adenylate kinase family. In terms of assembly, monomer.

The protein resides in the cytoplasm. The enzyme catalyses AMP + ATP = 2 ADP. Its pathway is purine metabolism; AMP biosynthesis via salvage pathway; AMP from ADP: step 1/1. Functionally, catalyzes the reversible transfer of the terminal phosphate group between ATP and AMP. Plays an important role in cellular energy homeostasis and in adenine nucleotide metabolism. This chain is Adenylate kinase, found in Rhizobium meliloti (strain 1021) (Ensifer meliloti).